A 470-amino-acid chain; its full sequence is Acetyl-CoA decarbonylase/synthase complex subunit beta 2 (470 aa).

C189, C192, C278, and C280 together coordinate [Ni-Fe-S] cluster.

This sequence belongs to the CdhC family. As to quaternary structure, monomer. The ACDS complex is made up of alpha, epsilon, beta, gamma and delta chains with a probable stoichiometry of (alpha(2)epsilon(2))(4)-beta(8)-(gamma(1)delta(1))(8) (Potential). Requires [Ni-Fe-S] cluster as cofactor.

It carries out the reaction Co(I)-[corrinoid Fe-S protein] + acetyl-CoA + H(+) = methyl-Co(III)-[corrinoid Fe-S protein] + CO + CoA. It participates in one-carbon metabolism; methanogenesis from acetate. Functionally, part of a complex that catalyzes the reversible cleavage of acetyl-CoA, allowing growth on acetate as sole source of carbon and energy. The alpha-epsilon complex generates CO from CO(2), while the beta subunit (this protein) combines the CO with CoA and a methyl group to form acetyl-CoA. The methyl group, which is incorporated into acetyl-CoA, is transferred to the beta subunit by a corrinoid iron-sulfur protein (the gamma-delta complex). This Methanosarcina acetivorans (strain ATCC 35395 / DSM 2834 / JCM 12185 / C2A) protein is Acetyl-CoA decarbonylase/synthase complex subunit beta 2 (cdhC2).